The primary structure comprises 390 residues: Flap endonuclease 1 (390 aa).

Positions 1–111 (MGIKGLAKLL…GELLKRREKR (111 aa)) are N-domain. A Mg(2+)-binding site is contributed by Asp34. Residues Arg47 and Arg77 each coordinate DNA. Mg(2+) contacts are provided by Asp93, Glu165, Glu167, Asp186, and Asp188. The I-domain stretch occupies residues 129–260 (EQDKQSKRLV…KTALKLIREH (132 aa)). DNA is bound at residue Glu165. Gly238 and Asp240 together coordinate DNA. Residue Asp240 coordinates Mg(2+). The tract at residues 342–390 (KPQSRMDSFFKVKANPEGDKKKAEKRKAELAASRGKGKKGKGGGGFKKK) is disordered. An interaction with PCNA region spans residues 343–351 (PQSRMDSFF). A compositionally biased stretch (basic and acidic residues) spans 349–370 (SFFKVKANPEGDKKKAEKRKAE). Positions 376–390 (GKGKKGKGGGGFKKK) are enriched in basic residues.

The protein belongs to the XPG/RAD2 endonuclease family. FEN1 subfamily. Interacts with PCNA. Three molecules of FEN1 bind to one PCNA trimer with each molecule binding to one PCNA monomer. PCNA stimulates the nuclease activity without altering cleavage specificity. Mg(2+) is required as a cofactor. Phosphorylated. Phosphorylation upon DNA damage induces relocalization to the nuclear plasma.

The protein resides in the nucleus. Its subcellular location is the nucleolus. The protein localises to the nucleoplasm. It is found in the mitochondrion. Functionally, structure-specific nuclease with 5'-flap endonuclease and 5'-3' exonuclease activities involved in DNA replication and repair. During DNA replication, cleaves the 5'-overhanging flap structure that is generated by displacement synthesis when DNA polymerase encounters the 5'-end of a downstream Okazaki fragment. It enters the flap from the 5'-end and then tracks to cleave the flap base, leaving a nick for ligation. Also involved in the long patch base excision repair (LP-BER) pathway, by cleaving within the apurinic/apyrimidinic (AP) site-terminated flap. Acts as a genome stabilization factor that prevents flaps from equilibrating into structures that lead to duplications and deletions. Also possesses 5'-3' exonuclease activity on nicked or gapped double-stranded DNA, and exhibits RNase H activity. Also involved in replication and repair of rDNA and in repairing mitochondrial DNA. The sequence is that of Flap endonuclease 1 from Thalassiosira pseudonana (Marine diatom).